A 309-amino-acid chain; its full sequence is Olfactory receptor 5AK2 (309 aa).

At 1–25 the chain is on the extracellular side; that stretch reads MTLGNSTEVTEFYLLGFGAQHEFWC. N5 is a glycosylation site (N-linked (GlcNAc...) asparagine). Residues 26–46 form a helical membrane-spanning segment; that stretch reads ILFIVFLLIYVTSIMGNSGII. The Cytoplasmic segment spans residues 47–54; sequence LLINTDSR. A helical transmembrane segment spans residues 55-75; that stretch reads FQTLTYFFLQHLAFVDICYTS. Topologically, residues 76–99 are extracellular; it reads AITPKMLQSFTEEKNLMLFQGCVI. A disulfide bond links C97 and C189. Residues 100–120 traverse the membrane as a helical segment; it reads QFLVYATFATSDCYLLAMMAV. At 121–133 the chain is on the cytoplasmic side; it reads DPYVAICKPLHYT. A helical transmembrane segment spans residues 134 to 154; it reads VIMSRTVCIRLVAGSYIMGSI. N155 carries an N-linked (GlcNAc...) asparagine glycan. Residues 155–196 lie on the Extracellular side of the membrane; it reads NASVQTGFTCSLSFCKSNSINHFFCDVPPILALSCSNVDINI. The helical transmembrane segment at 197 to 217 threads the bilayer; it reads MLLVVFVGSNLIFTGLVVIFS. At 218–237 the chain is on the cytoplasmic side; sequence YIYIMATILKMSSSAGRKKS. A helical membrane pass occupies residues 238–258; it reads FSTCASHLTAVTIFYGTLSYM. The Extracellular portion of the chain corresponds to 259 to 271; the sequence is YLQSHSNNSQENM. Residue N265 is glycosylated (N-linked (GlcNAc...) asparagine). Residues 272–292 traverse the membrane as a helical segment; it reads KVAFIFYGTVIPMLNPLIYSL. Residues 293–309 lie on the Cytoplasmic side of the membrane; the sequence is RNKEVKEALKVIGKKLF.

It belongs to the G-protein coupled receptor 1 family.

Its subcellular location is the cell membrane. In terms of biological role, odorant receptor. In Homo sapiens (Human), this protein is Olfactory receptor 5AK2 (OR5AK2).